Here is a 123-residue protein sequence, read N- to C-terminus: Fluoride-specific ion channel FluC (123 aa).

4 helical membrane passes run 7-27 (MAIALGGAFGAVARFYISGLL), 39-59 (MVNSIASLILGYLYGLLFWGF), 68-88 (FFGTGFCGALSTFSTFSYETF), and 101-121 (LNILANVIITIALVFAGFMLA). Na(+) contacts are provided by Gly75 and Ser78.

The protein belongs to the fluoride channel Fluc/FEX (TC 1.A.43) family.

Its subcellular location is the cell membrane. It carries out the reaction fluoride(in) = fluoride(out). Na(+) is not transported, but it plays an essential structural role and its presence is essential for fluoride channel function. In terms of biological role, fluoride-specific ion channel. Important for reducing fluoride concentration in the cell, thus reducing its toxicity. This Thermococcus kodakarensis (strain ATCC BAA-918 / JCM 12380 / KOD1) (Pyrococcus kodakaraensis (strain KOD1)) protein is Fluoride-specific ion channel FluC.